A 322-amino-acid chain; its full sequence is Lipoyl synthase (322 aa).

[4Fe-4S] cluster is bound by residues cysteine 69, cysteine 74, cysteine 80, cysteine 95, cysteine 99, cysteine 102, and serine 309. The region spanning 81–298 (FNHGTATFMI…KEIALELGFT (218 aa)) is the Radical SAM core domain.

Belongs to the radical SAM superfamily. Lipoyl synthase family. [4Fe-4S] cluster is required as a cofactor.

The protein localises to the cytoplasm. It catalyses the reaction [[Fe-S] cluster scaffold protein carrying a second [4Fe-4S](2+) cluster] + N(6)-octanoyl-L-lysyl-[protein] + 2 oxidized [2Fe-2S]-[ferredoxin] + 2 S-adenosyl-L-methionine + 4 H(+) = [[Fe-S] cluster scaffold protein] + N(6)-[(R)-dihydrolipoyl]-L-lysyl-[protein] + 4 Fe(3+) + 2 hydrogen sulfide + 2 5'-deoxyadenosine + 2 L-methionine + 2 reduced [2Fe-2S]-[ferredoxin]. It functions in the pathway protein modification; protein lipoylation via endogenous pathway; protein N(6)-(lipoyl)lysine from octanoyl-[acyl-carrier-protein]: step 2/2. Its function is as follows. Catalyzes the radical-mediated insertion of two sulfur atoms into the C-6 and C-8 positions of the octanoyl moiety bound to the lipoyl domains of lipoate-dependent enzymes, thereby converting the octanoylated domains into lipoylated derivatives. The protein is Lipoyl synthase of Photobacterium profundum (strain SS9).